Reading from the N-terminus, the 558-residue chain is Glucose-6-phosphate isomerase (558 aa).

Position 2 is an N-acetylalanine (Ala2). Residue Lys12 is modified to N6-acetyllysine. Lys34 is modified (N6-(2-hydroxyisobutyryl)lysine). Residue Ser107 is modified to Phosphoserine. At Thr109 the chain carries Phosphothreonine. Lys142 is modified (N6-acetyllysine). Residue 159–160 participates in D-glucose 6-phosphate binding; the sequence is GS. Ser185 carries the post-translational modification Phosphoserine; by CK2. D-glucose 6-phosphate is bound at residue 210–215; it reads SKTFTT. Thr250 bears the Phosphothreonine mark. 3 residues coordinate D-glucose 6-phosphate: Gln354, Glu358, and His389. The active-site Proton donor is Glu358. His389 is an active-site residue. N6-acetyllysine; alternate is present on Lys454. Lys454 carries the N6-malonyllysine; alternate modification. Lys454 carries the post-translational modification N6-succinyllysine; alternate. Residue Ser455 is modified to Phosphoserine. Lys519 is a D-glucose 6-phosphate binding site. Lys519 is a catalytic residue.

The protein belongs to the GPI family. In terms of assembly, homodimer; in the catalytically active form. Monomer in the secreted form. Phosphorylation at Ser-185 by CK2 has been shown to decrease enzymatic activity and may contribute to secretion by a non-classical secretory pathway. In terms of processing, ISGylated.

The protein localises to the cytoplasm. It is found in the secreted. It catalyses the reaction alpha-D-glucose 6-phosphate = beta-D-fructose 6-phosphate. It functions in the pathway carbohydrate degradation; glycolysis; D-glyceraldehyde 3-phosphate and glycerone phosphate from D-glucose: step 2/4. In terms of biological role, in the cytoplasm, catalyzes the conversion of glucose-6-phosphate to fructose-6-phosphate, the second step in glycolysis, and the reverse reaction during gluconeogenesis. Besides it's role as a glycolytic enzyme, also acts as a secreted cytokine: acts as an angiogenic factor (AMF) that stimulates endothelial cell motility. Acts as a neurotrophic factor, neuroleukin, for spinal and sensory neurons. It is secreted by lectin-stimulated T-cells and induces immunoglobulin secretion. This is Glucose-6-phosphate isomerase from Pongo abelii (Sumatran orangutan).